Reading from the N-terminus, the 476-residue chain is Glucan endo-1,3-beta-glucosidase 9 (476 aa).

An N-terminal signal peptide occupies residues 1–25 (MARRLFLLLLAVTAGLSLTGTTVRA). N-linked (GlcNAc...) asparagine glycans are attached at residues asparagine 88 and asparagine 101. The active-site Proton donor is the glutamate 122. Asparagine 184, asparagine 216, asparagine 277, asparagine 320, asparagine 342, asparagine 374, and asparagine 405 each carry an N-linked (GlcNAc...) asparagine glycan. Cysteines 364 and 424 form a disulfide. A lipid anchor (GPI-anchor amidated serine) is attached at serine 453. The propeptide at 454–476 (SSQTPNFFQSWPLLLLFLLSGLF) is removed in mature form.

The protein belongs to the glycosyl hydrolase 17 family. Post-translationally, contains two additional disulfide bonds.

Its subcellular location is the secreted. It localises to the cell wall. The protein localises to the cell membrane. It carries out the reaction Hydrolysis of (1-&gt;3)-beta-D-glucosidic linkages in (1-&gt;3)-beta-D-glucans.. The sequence is that of Glucan endo-1,3-beta-glucosidase 9 from Arabidopsis thaliana (Mouse-ear cress).